A 426-amino-acid chain; its full sequence is Tyrosine--tRNA ligase (426 aa).

Y35 is a binding site for L-tyrosine. Residues 40–49 (PTADSLHIGH) carry the 'HIGH' region motif. L-tyrosine is bound by residues Y172 and Q176. The 'KMSKS' region motif lies at 232–236 (KLGKS). Position 235 (K235) interacts with ATP. An S4 RNA-binding domain is found at 357–414 (ENIKDILVNSKLSKSKNNAKSVILSSSIRINNKKQKSIDFMFKKEDKLFNLFTLIKKG).

The protein belongs to the class-I aminoacyl-tRNA synthetase family. TyrS type 1 subfamily. In terms of assembly, homodimer.

The protein resides in the cytoplasm. It catalyses the reaction tRNA(Tyr) + L-tyrosine + ATP = L-tyrosyl-tRNA(Tyr) + AMP + diphosphate + H(+). Functionally, catalyzes the attachment of tyrosine to tRNA(Tyr) in a two-step reaction: tyrosine is first activated by ATP to form Tyr-AMP and then transferred to the acceptor end of tRNA(Tyr). The chain is Tyrosine--tRNA ligase from Wigglesworthia glossinidia brevipalpis.